Here is a 187-residue protein sequence, read N- to C-terminus: UPF0301 protein HSM_1900 (187 aa).

The protein belongs to the UPF0301 (AlgH) family.

In Histophilus somni (strain 2336) (Haemophilus somnus), this protein is UPF0301 protein HSM_1900.